The chain runs to 354 residues: Probable L-ascorbate-6-phosphate lactonase UlaG (354 aa).

This sequence belongs to the UlaG family. The cofactor is a divalent metal cation.

The protein localises to the cytoplasm. The enzyme catalyses L-ascorbate 6-phosphate + H2O = 3-dehydro-L-gulonate 6-phosphate. It participates in cofactor degradation; L-ascorbate degradation; D-xylulose 5-phosphate from L-ascorbate: step 1/4. Probably catalyzes the hydrolysis of L-ascorbate-6-P into 3-keto-L-gulonate-6-P. Is essential for L-ascorbate utilization under anaerobic conditions. The protein is Probable L-ascorbate-6-phosphate lactonase UlaG of Shigella dysenteriae serotype 1 (strain Sd197).